The following is a 350-amino-acid chain: Heat-inducible transcription repressor HrcA (350 aa).

It belongs to the HrcA family.

Negative regulator of class I heat shock genes (grpE-dnaK-dnaJ and groELS operons). Prevents heat-shock induction of these operons. The protein is Heat-inducible transcription repressor HrcA of Ligilactobacillus salivarius (strain UCC118) (Lactobacillus salivarius).